The chain runs to 96 residues: Dynein light chain roadblock-type 1 (96 aa).

Position 2 is an N-acetylalanine (Ala2).

It belongs to the GAMAD family. As to quaternary structure, homodimer. The cytoplasmic dynein 1 complex consists of two catalytic heavy chains (HCs) and a number of non-catalytic subunits presented by intermediate chains (ICs), light intermediate chains (LICs) and light chains (LCs); the composition seems to vary in respect to the IC, LIC and LC composition. The heavy chain homodimer serves as a scaffold for the probable homodimeric assembly of the respective non-catalytic subunits. The ICs and LICs bind directly to the HC dimer and the LCs assemble on the IC dimer. Interacts with DYNLRB2. Interacts with DYNC1I1 and DYNC1I2. Interacts with RAB6A isoform 1 (GTP-bound); the interaction is direct. Interacts with RAB6A isoform 2 (GDP-bound); the interaction is direct. Interacts with RAB6B (GDP-bound).

It localises to the cytoplasm. The protein resides in the cytoskeleton. Its function is as follows. Acts as one of several non-catalytic accessory components of the cytoplasmic dynein 1 complex that are thought to be involved in linking dynein to cargos and to adapter proteins that regulate dynein function. Cytoplasmic dynein 1 acts as a motor for the intracellular retrograde motility of vesicles and organelles along microtubules. The sequence is that of Dynein light chain roadblock-type 1 (Dynlrb1) from Mus musculus (Mouse).